The primary structure comprises 359 residues: Nicotinate-nucleotide--dimethylbenzimidazole phosphoribosyltransferase (359 aa).

E318 (proton acceptor) is an active-site residue.

It belongs to the CobT family. In terms of assembly, homodimer.

It catalyses the reaction 5,6-dimethylbenzimidazole + nicotinate beta-D-ribonucleotide = alpha-ribazole 5'-phosphate + nicotinate + H(+). Its pathway is nucleoside biosynthesis; alpha-ribazole biosynthesis; alpha-ribazole from 5,6-dimethylbenzimidazole: step 1/2. Catalyzes the synthesis of alpha-ribazole-5'-phosphate from nicotinate mononucleotide (NAMN) and 5,6-dimethylbenzimidazole (DMB). This Shigella flexneri serotype 5b (strain 8401) protein is Nicotinate-nucleotide--dimethylbenzimidazole phosphoribosyltransferase.